Here is a 272-residue protein sequence, read N- to C-terminus: Shikimate dehydrogenase (NADP(+)) (272 aa).

Residues 14–16 and threonine 61 contribute to the shikimate site; that span reads SKS. Residue lysine 65 is the Proton acceptor of the active site. Residue glutamate 77 participates in NADP(+) binding. Shikimate is bound by residues asparagine 86 and aspartate 102. NADP(+)-binding positions include 126-130, 149-154, and methionine 213; these read GAGGA and NRTVSR. Position 215 (tyrosine 215) interacts with shikimate. Residue glycine 237 participates in NADP(+) binding.

The protein belongs to the shikimate dehydrogenase family. In terms of assembly, homodimer.

It carries out the reaction shikimate + NADP(+) = 3-dehydroshikimate + NADPH + H(+). The protein operates within metabolic intermediate biosynthesis; chorismate biosynthesis; chorismate from D-erythrose 4-phosphate and phosphoenolpyruvate: step 4/7. Its function is as follows. Involved in the biosynthesis of the chorismate, which leads to the biosynthesis of aromatic amino acids. Catalyzes the reversible NADPH linked reduction of 3-dehydroshikimate (DHSA) to yield shikimate (SA). The sequence is that of Shikimate dehydrogenase (NADP(+)) from Escherichia coli O7:K1 (strain IAI39 / ExPEC).